Consider the following 305-residue polypeptide: Ornithine carbamoyltransferase (305 aa).

Carbamoyl phosphate is bound by residues 50-53 (STRT), Gln-77, Arg-101, and 128-131 (HPCQ). L-ornithine-binding positions include Asn-162, Asp-220, and 224–225 (SM). Carbamoyl phosphate-binding positions include 260–261 (CL) and Arg-288.

This sequence belongs to the aspartate/ornithine carbamoyltransferase superfamily. OTCase family.

The protein localises to the cytoplasm. The catalysed reaction is carbamoyl phosphate + L-ornithine = L-citrulline + phosphate + H(+). The protein operates within amino-acid degradation; L-arginine degradation via ADI pathway; carbamoyl phosphate from L-arginine: step 2/2. Functionally, reversibly catalyzes the transfer of the carbamoyl group from carbamoyl phosphate (CP) to the N(epsilon) atom of ornithine (ORN) to produce L-citrulline. This is Ornithine carbamoyltransferase from Akkermansia muciniphila (strain ATCC BAA-835 / DSM 22959 / JCM 33894 / BCRC 81048 / CCUG 64013 / CIP 107961 / Muc).